The following is a 544-amino-acid chain: Serine/threonine-protein kinase bur1 (544 aa).

Residues 25–326 form the Protein kinase domain; sequence FEFLGKLGEG…AIDALKHPYF (302 aa). Residues 31-39 and Lys-54 each bind ATP; that span reads LGEGTFGEV. Asp-155 acts as the Proton acceptor in catalysis. Positions 357 to 544 are disordered; it reads AAMPPAPAGG…ERVDRGPYRR (188 aa). Over residues 374–403 the composition is skewed to polar residues; the sequence is GGWSTNSGSRTGAETRNPRISSAARSQGNQ. Composition is skewed to basic and acidic residues over residues 419–438, 456–466, 488–511, and 532–544; these read RGNE…HRDG, HSDKTGRDRGY, DRNR…DKSH, and NYRE…PYRR.

It belongs to the protein kinase superfamily. CMGC Ser/Thr protein kinase family. CDC2/CDKX subfamily.

The protein resides in the nucleus. The enzyme catalyses L-seryl-[protein] + ATP = O-phospho-L-seryl-[protein] + ADP + H(+). The catalysed reaction is L-threonyl-[protein] + ATP = O-phospho-L-threonyl-[protein] + ADP + H(+). It carries out the reaction [DNA-directed RNA polymerase] + ATP = phospho-[DNA-directed RNA polymerase] + ADP + H(+). Serine/threonine-protein kinase involved in transcription regulation. Phosphorylates the UBC2/RAD6 ubiquitin-conjugating enzyme (E2), leading to monoubiquitination of histone H2B and the silencing of telomeric-associated genes. Also required for histone H3 methylation. Necessary for the recovery from pheromone-induced growth arrest in the cell cycle G1 phase. The polypeptide is Serine/threonine-protein kinase bur1 (ptkA) (Emericella nidulans (strain FGSC A4 / ATCC 38163 / CBS 112.46 / NRRL 194 / M139) (Aspergillus nidulans)).